Consider the following 283-residue polypeptide: Large ribosomal subunit protein uL2 (283 aa).

2 disordered regions span residues 1 to 59 and 222 to 283; these read MSIK…GGHK and RGVA…TGGQ.

This sequence belongs to the universal ribosomal protein uL2 family. In terms of assembly, part of the 50S ribosomal subunit. Forms a bridge to the 30S subunit in the 70S ribosome.

Its function is as follows. One of the primary rRNA binding proteins. Required for association of the 30S and 50S subunits to form the 70S ribosome, for tRNA binding and peptide bond formation. It has been suggested to have peptidyltransferase activity; this is somewhat controversial. Makes several contacts with the 16S rRNA in the 70S ribosome. This Salinibacter ruber (strain DSM 13855 / M31) protein is Large ribosomal subunit protein uL2.